A 193-amino-acid polypeptide reads, in one-letter code: Large ribosomal subunit protein uL18 (193 aa).

Belongs to the universal ribosomal protein uL18 family. In terms of assembly, part of the 50S ribosomal subunit. Contacts the 5S and 23S rRNAs.

This is one of the proteins that bind and probably mediate the attachment of the 5S RNA into the large ribosomal subunit, where it forms part of the central protuberance. This Methanococcus maripaludis (strain DSM 14266 / JCM 13030 / NBRC 101832 / S2 / LL) protein is Large ribosomal subunit protein uL18.